The sequence spans 198 residues: Recombination protein RecR (198 aa).

A C4-type zinc finger spans residues cysteine 57–cysteine 72. Residues serine 80–serine 175 form the Toprim domain.

Belongs to the RecR family.

Functionally, may play a role in DNA repair. It seems to be involved in an RecBC-independent recombinational process of DNA repair. It may act with RecF and RecO. This is Recombination protein RecR from Staphylococcus saprophyticus subsp. saprophyticus (strain ATCC 15305 / DSM 20229 / NCIMB 8711 / NCTC 7292 / S-41).